The chain runs to 1055 residues: MDS1 and EVI1 complex locus protein EVI1-A (1055 aa).

C2H2-type zinc fingers lie at residues 21 to 48 (YRCE…VTPH), 75 to 97 (HECK…LLSH), and 103 to 125 (YKCD…QMSH). The C2H2-type 4; degenerate zinc finger occupies 131-155 (YECENCSKQVFTDPSNLQRHIRSQH). C2H2-type zinc fingers lie at residues 161–183 (HACS…KHIH) and 189–211 (FVCE…KRMH). The C2H2-type 7; atypical zinc finger occupies 218-240 (IKCKDCGQMFSTTSSLNKHRRFC). Disordered regions lie at residues 324–345 (PVKG…VNQP), 372–423 (FITE…SDKD), and 531–621 (VPLK…PELP). Positions 332 to 345 (EQSSKSQSPHVNQP) are enriched in polar residues. Positions 381–392 (RPHEKISDHSES) are enriched in basic and acidic residues. The span at 399-413 (STPSGSDLETTSGSD) shows a compositional bias: polar residues. The Nuclear localization signal signature appears at 422 to 435 (KDKLKENGKLYKDK). Residues 531 to 566 (VPLKIEPESPKETKKVQKGKTESPFDLTTKRKEEKA) are compositionally biased toward basic and acidic residues. The CTBP-binding motif 1 signature appears at 554–558 (PFDLT). Residues 569–583 (NVPSKSGAPTSSNHD) show a composition bias toward polar residues. Positions 585-589 (PLDLS) match the CTBP-binding motif 2 motif. Residues 591–601 (GSRSRAATTKQ) are compositionally biased toward polar residues. The span at 602–621 (TEPRKNHIFNEKKDMDPELP) shows a compositional bias: basic and acidic residues. C2H2-type zinc fingers lie at residues 734-756 (YTCR…LRTH), 762-785 (YRCK…RNIH), and 791-813 (FKCH…LKKH). Disordered stretches follow at residues 813 to 837 (HENG…GPIL) and 922 to 957 (SVDE…EDFK). Residues 816 to 827 (GNLSGTAASSPH) are compositionally biased toward polar residues. Positions 944 to 954 (DDEDDDDDEEE) are enriched in acidic residues.

As to quaternary structure, homooligomer. Interacts with ctbp. Expressed dynamically during embryonic development; in the developing pronephros, specific areas of the brain (forebrain, midbrain and hindbrain), and in the majority of the visceral arch, and head mesenchyme derived from neural crest cells. Within the pronephros, expressed in the ventroposterior region of the pronephros anlagen from stage 20 (and is absent from the splanchnic layer that forms the glomus), then expression becomes restricted to the distal tubule and duct by the tadpole stage. In adults, expressed in various tissues including kidney, lung, testis, spleen and stomach.

It localises to the nucleus. The protein resides in the nucleus speckle. In terms of biological role, transcriptional repressor during pronephros development. Plays a role in regionalization of the pronephros; may promote formation of the distal tubule and duct over formation of the glomus and proximal tubule. The protein is MDS1 and EVI1 complex locus protein EVI1-A (mecom-a) of Xenopus laevis (African clawed frog).